Reading from the N-terminus, the 652-residue chain is uncharacterized protein (652 aa).

Residues 1–13 (MSVTESKAKTERK) are compositionally biased toward basic and acidic residues. The disordered stretch occupies residues 1-21 (MSVTESKAKTERKSSRKPAKT).

Belongs to the ParB family.

This is an uncharacterized protein from Escherichia coli (strain K12).